A 188-amino-acid chain; its full sequence is Peptide deformylase (188 aa).

Cysteine 109 and histidine 152 together coordinate Fe cation. Glutamate 153 is an active-site residue. Histidine 156 serves as a coordination point for Fe cation.

Belongs to the polypeptide deformylase family. Fe(2+) is required as a cofactor.

The catalysed reaction is N-terminal N-formyl-L-methionyl-[peptide] + H2O = N-terminal L-methionyl-[peptide] + formate. In terms of biological role, removes the formyl group from the N-terminal Met of newly synthesized proteins. Requires at least a dipeptide for an efficient rate of reaction. N-terminal L-methionine is a prerequisite for activity but the enzyme has broad specificity at other positions. The sequence is that of Peptide deformylase from Chloroflexus aggregans (strain MD-66 / DSM 9485).